We begin with the raw amino-acid sequence, 142 residues long: MESMGNNSPGPEIRALARNIRMSAHKARKVINQIRGCSYGQALMILELMPYGACYPISQLIHSAAANANHNMGLNKANLLVSRVEVNEGAVFKRVQPRAQGRGYPIQKPTCHITIVLEEISRSNDPIMSIESRKRGYVWRRK.

It belongs to the universal ribosomal protein uL22 family. As to quaternary structure, part of the 50S ribosomal subunit.

The protein resides in the plastid. It is found in the chloroplast. Functionally, this protein binds specifically to 23S rRNA. The globular domain of the protein is located near the polypeptide exit tunnel on the outside of the subunit, while an extended beta-hairpin is found that lines the wall of the exit tunnel in the center of the 70S ribosome. In Picea abies (Norway spruce), this protein is Large ribosomal subunit protein uL22c (rpl22).